The chain runs to 154 residues: UPF0178 protein Gbem_2221 (154 aa).

The protein belongs to the UPF0178 family.

This chain is UPF0178 protein Gbem_2221, found in Citrifermentans bemidjiense (strain ATCC BAA-1014 / DSM 16622 / JCM 12645 / Bem) (Geobacter bemidjiensis).